A 424-amino-acid chain; its full sequence is F-box protein At2g38590 (424 aa).

The region spanning 2 to 47 is the F-box domain; the sequence is TTMISNLPRVLIEEIFFRVPLKSLRAVRLTCKSWNTLSKSRSFRKL.

This is F-box protein At2g38590 from Arabidopsis thaliana (Mouse-ear cress).